The following is a 285-amino-acid chain: Urease accessory protein UreD (285 aa).

The protein belongs to the UreD family. UreD, UreF and UreG form a complex that acts as a GTP-hydrolysis-dependent molecular chaperone, activating the urease apoprotein by helping to assemble the nickel containing metallocenter of UreC. The UreE protein probably delivers the nickel.

The protein localises to the cytoplasm. In terms of biological role, required for maturation of urease via the functional incorporation of the urease nickel metallocenter. The chain is Urease accessory protein UreD from Picosynechococcus sp. (strain ATCC 27264 / PCC 7002 / PR-6) (Agmenellum quadruplicatum).